A 483-amino-acid chain; its full sequence is Regulatory protein ViaA (483 aa).

The protein belongs to the ViaA family. As to quaternary structure, homodimer. Interacts with RavA.

It is found in the cytoplasm. Its function is as follows. Component of the RavA-ViaA chaperone complex, which may act on the membrane to optimize the function of some of the respiratory chains. ViaA stimulates the ATPase activity of RavA. This chain is Regulatory protein ViaA, found in Salmonella heidelberg (strain SL476).